We begin with the raw amino-acid sequence, 198 residues long: Holliday junction branch migration complex subunit RuvA (198 aa).

The interval 1-61 (MYEYFEGIIQ…DNDQTLYGFE (61 aa)) is domain I. The domain II stretch occupies residues 62–140 (GAADKRTFNQ…TDGQPAAAAI (79 aa)). Positions 141–145 (APVAS) are flexible linker. The interval 146–198 (DVDSELADALAALVALGYPQRTVDGLTDTLKAFSAKTTDAYLREGLRLLSGKA) is domain III.

It belongs to the RuvA family. Homotetramer. Forms an RuvA(8)-RuvB(12)-Holliday junction (HJ) complex. HJ DNA is sandwiched between 2 RuvA tetramers; dsDNA enters through RuvA and exits via RuvB. An RuvB hexamer assembles on each DNA strand where it exits the tetramer. Each RuvB hexamer is contacted by two RuvA subunits (via domain III) on 2 adjacent RuvB subunits; this complex drives branch migration. In the full resolvosome a probable DNA-RuvA(4)-RuvB(12)-RuvC(2) complex forms which resolves the HJ.

It localises to the cytoplasm. In terms of biological role, the RuvA-RuvB-RuvC complex processes Holliday junction (HJ) DNA during genetic recombination and DNA repair, while the RuvA-RuvB complex plays an important role in the rescue of blocked DNA replication forks via replication fork reversal (RFR). RuvA specifically binds to HJ cruciform DNA, conferring on it an open structure. The RuvB hexamer acts as an ATP-dependent pump, pulling dsDNA into and through the RuvAB complex. HJ branch migration allows RuvC to scan DNA until it finds its consensus sequence, where it cleaves and resolves the cruciform DNA. The protein is Holliday junction branch migration complex subunit RuvA of Lacticaseibacillus casei (strain BL23) (Lactobacillus casei).